A 180-amino-acid polypeptide reads, in one-letter code: Probable Brix domain-containing ribosomal biogenesis protein (180 aa).

The Brix domain occupies 1–178 (MTTSRRPSPR…KPAEMVKRGR (178 aa)).

Functionally, probably involved in the biogenesis of the ribosome. In Aeropyrum pernix (strain ATCC 700893 / DSM 11879 / JCM 9820 / NBRC 100138 / K1), this protein is Probable Brix domain-containing ribosomal biogenesis protein.